The following is a 159-amino-acid chain: Phosphopantetheine adenylyltransferase (159 aa).

A substrate-binding site is contributed by threonine 9. Residues 9-10 (TF) and histidine 17 contribute to the ATP site. Positions 41, 73, and 87 each coordinate substrate. ATP-binding positions include 88–90 (GLR), glutamate 98, and 123–129 (YSFISST).

It belongs to the bacterial CoaD family. In terms of assembly, homohexamer. It depends on Mg(2+) as a cofactor.

The protein resides in the cytoplasm. The enzyme catalyses (R)-4'-phosphopantetheine + ATP + H(+) = 3'-dephospho-CoA + diphosphate. It participates in cofactor biosynthesis; coenzyme A biosynthesis; CoA from (R)-pantothenate: step 4/5. Reversibly transfers an adenylyl group from ATP to 4'-phosphopantetheine, yielding dephospho-CoA (dPCoA) and pyrophosphate. This Pseudomonas aeruginosa (strain LESB58) protein is Phosphopantetheine adenylyltransferase.